Consider the following 457-residue polypeptide: Bifunctional protein GlmU (457 aa).

Residues 1 to 229 (MYNCAIILAA…YEEIMGVNSR (229 aa)) are pyrophosphorylase. Residues 8-11 (LAAG), Lys22, Gln73, and 78-79 (GT) contribute to the UDP-N-acetyl-alpha-D-glucosamine site. Asp103 provides a ligand contact to Mg(2+). UDP-N-acetyl-alpha-D-glucosamine contacts are provided by Gly140, Glu155, Asn170, and Asn227. A Mg(2+)-binding site is contributed by Asn227. The interval 230–250 (VQLSEAEIVMRKRINHKHMVN) is linker. Residues 251–457 (GVTFIDCEST…WLDKKGLLKK (207 aa)) form an N-acetyltransferase region. UDP-N-acetyl-alpha-D-glucosamine-binding residues include Arg332 and Lys350. Catalysis depends on His362, which acts as the Proton acceptor. Positions 365 and 376 each coordinate UDP-N-acetyl-alpha-D-glucosamine. Acetyl-CoA-binding positions include 385–386 (NY), Ala422, and Arg439.

In the N-terminal section; belongs to the N-acetylglucosamine-1-phosphate uridyltransferase family. The protein in the C-terminal section; belongs to the transferase hexapeptide repeat family. Homotrimer. It depends on Mg(2+) as a cofactor.

Its subcellular location is the cytoplasm. It carries out the reaction alpha-D-glucosamine 1-phosphate + acetyl-CoA = N-acetyl-alpha-D-glucosamine 1-phosphate + CoA + H(+). The catalysed reaction is N-acetyl-alpha-D-glucosamine 1-phosphate + UTP + H(+) = UDP-N-acetyl-alpha-D-glucosamine + diphosphate. Its pathway is nucleotide-sugar biosynthesis; UDP-N-acetyl-alpha-D-glucosamine biosynthesis; N-acetyl-alpha-D-glucosamine 1-phosphate from alpha-D-glucosamine 6-phosphate (route II): step 2/2. It participates in nucleotide-sugar biosynthesis; UDP-N-acetyl-alpha-D-glucosamine biosynthesis; UDP-N-acetyl-alpha-D-glucosamine from N-acetyl-alpha-D-glucosamine 1-phosphate: step 1/1. The protein operates within bacterial outer membrane biogenesis; LPS lipid A biosynthesis. In terms of biological role, catalyzes the last two sequential reactions in the de novo biosynthetic pathway for UDP-N-acetylglucosamine (UDP-GlcNAc). The C-terminal domain catalyzes the transfer of acetyl group from acetyl coenzyme A to glucosamine-1-phosphate (GlcN-1-P) to produce N-acetylglucosamine-1-phosphate (GlcNAc-1-P), which is converted into UDP-GlcNAc by the transfer of uridine 5-monophosphate (from uridine 5-triphosphate), a reaction catalyzed by the N-terminal domain. The chain is Bifunctional protein GlmU from Clostridium botulinum (strain Loch Maree / Type A3).